The chain runs to 127 residues: Aspartate 1-decarboxylase (127 aa).

Catalysis depends on Ser-25, which acts as the Schiff-base intermediate with substrate; via pyruvic acid. Ser-25 bears the Pyruvic acid (Ser) mark. Substrate is bound at residue Thr-57. Tyr-58 (proton donor) is an active-site residue. Position 73-75 (73-75 (GAA)) interacts with substrate.

Belongs to the PanD family. As to quaternary structure, heterooctamer of four alpha and four beta subunits. Requires pyruvate as cofactor. In terms of processing, is synthesized initially as an inactive proenzyme, which is activated by self-cleavage at a specific serine bond to produce a beta-subunit with a hydroxyl group at its C-terminus and an alpha-subunit with a pyruvoyl group at its N-terminus.

It localises to the cytoplasm. It carries out the reaction L-aspartate + H(+) = beta-alanine + CO2. The protein operates within cofactor biosynthesis; (R)-pantothenate biosynthesis; beta-alanine from L-aspartate: step 1/1. Its function is as follows. Catalyzes the pyruvoyl-dependent decarboxylation of aspartate to produce beta-alanine. The chain is Aspartate 1-decarboxylase from Clostridium botulinum (strain Loch Maree / Type A3).